Reading from the N-terminus, the 218-residue chain is Capsid protein (218 aa).

At Met-1 the chain carries N-acetylmethionine; by host. Over residues 1–10 the composition is skewed to low complexity; that stretch reads MDKSESASAG. The disordered stretch occupies residues 1–30; it reads MDKSESASAGRNRRRRPRRGSRSASSSSDA. Over residues 11–21 the composition is skewed to basic residues; it reads RNRRRRPRRGS.

Belongs to the cucumovirus capsid protein family.

Its subcellular location is the virion. Capsid protein. Probably binds RNA and plays a role in packaging. The sequence is that of Capsid protein from Cucumis sativus (Cucumber).